Consider the following 139-residue polypeptide: 10 kDa chaperonin 2, chloroplastic (139 aa).

Residues 1–39 constitute a chloroplast transit peptide; the sequence is MASTFVCSLPNPFFAFPVKATTPSTANHTLLGSRRGCLR. The interval 51 to 138 is cpn-10 domain; it reads KVVPQADRVL…CKESDLLALV (88 aa).

It belongs to the GroES chaperonin family. Expressed in leaves and stems. Expressed at low levels in germinating seeds, seedlings, rosettes leaves, flowers and siliques.

It localises to the plastid. The protein resides in the chloroplast stroma. Its function is as follows. Functions as a co-chaperone for protein folding in chloroplasts. This Arabidopsis thaliana (Mouse-ear cress) protein is 10 kDa chaperonin 2, chloroplastic.